The chain runs to 358 residues: Putative myc-like protein MYCLP1 (358 aa).

Disordered stretches follow at residues 150-171 (ACSRSESPSDSEGEEIDVTVKK) and 219-245 (QEGAPKRMPPKEALEREAPGGKDDKED). A compositionally biased stretch (basic and acidic residues) spans 227 to 242 (PPKEALEREAPGGKDD). Positions 274-326 (WTKKKYHSYLERKRRNDQRSRFLALRDEVPALASCSRVSKVMILVKATEYLHE) constitute a bHLH domain.

As to quaternary structure, efficient DNA binding requires dimerization with another bHLH protein. Binds DNA as a heterodimer with MAX. Detected in adult testis.

It localises to the nucleus. This chain is Putative myc-like protein MYCLP1 (MYCLP1), found in Homo sapiens (Human).